The sequence spans 285 residues: Alginate lyase (285 aa).

A signal peptide spans 1–20 (MIKSNLVISSLAIVSSMSYA).

It belongs to the polysaccharide lyase 6 family.

It carries out the reaction Eliminative cleavage of alginate to give oligosaccharides with 4-deoxy-alpha-L-erythro-hex-4-enuronosyl groups at their non-reducing ends and beta-D-mannuronate at their reducing end.. The protein is Alginate lyase (alxM) of Photobacterium sp. (strain ATCC 43367).